Here is a 312-residue protein sequence, read N- to C-terminus: Taste receptor type 2 member 140 (312 aa).

Topologically, residues 1 to 9 are extracellular; that stretch reads MKVTVECAL. Residues 10–30 form a helical membrane-spanning segment; sequence LITLIVEIIIGCLGNGFIAVV. Residues 31–46 lie on the Cytoplasmic side of the membrane; sequence NIMDWTKRRRFSLVDQ. The chain crosses the membrane as a helical span at residues 47-67; that stretch reads ILTALAISRLAFVWSLLTVLV. At 68–87 the chain is on the extracellular side; the sequence is ISELHSSLLITRKMLRIINN. The chain crosses the membrane as a helical span at residues 88 to 108; it reads FWTVTNHFSIWLATCLSIFYF. Over 109-133 the chain is Cytoplasmic; the sequence is LKIANFSNSIFLSLRWRVKTVVSLT. The chain crosses the membrane as a helical span at residues 134–154; it reads LLVSLLLLLVNVIIINTCIVI. Over 155 to 185 the chain is Extracellular; the sequence is SVEGYKVNMSYSSHFNNNPQISRIPLFTNTM. N-linked (GlcNAc...) asparagine glycosylation occurs at asparagine 162. A helical transmembrane segment spans residues 186 to 206; it reads FTFIPFTVTLTIFLLLIFSLW. The Cytoplasmic portion of the chain corresponds to 207–229; it reads RHLKKMQHRAKGPRDPSTTAHIK. A helical transmembrane segment spans residues 230-250; that stretch reads ALQMVVTFLFLYTIFFLALVM. At 251 to 264 the chain is on the extracellular side; that stretch reads QAWNNEIQSKTVFN. The chain crosses the membrane as a helical span at residues 265-285; sequence LVFESIALAFPSGHSCVLILG. Residues 286–312 lie on the Cytoplasmic side of the membrane; that stretch reads NSKLRQAFLTIIWWLRSSFNAAELSSP.

Belongs to the G-protein coupled receptor T2R family.

The protein localises to the membrane. Functionally, putative taste receptor which may play a role in the perception of bitterness. In Rattus norvegicus (Rat), this protein is Taste receptor type 2 member 140.